The chain runs to 96 residues: Small ribosomal subunit protein bS18 (96 aa).

This sequence belongs to the bacterial ribosomal protein bS18 family. In terms of assembly, part of the 30S ribosomal subunit. Forms a tight heterodimer with protein bS6.

Functionally, binds as a heterodimer with protein bS6 to the central domain of the 16S rRNA, where it helps stabilize the platform of the 30S subunit. This is Small ribosomal subunit protein bS18 from Borrelia garinii subsp. bavariensis (strain ATCC BAA-2496 / DSM 23469 / PBi) (Borreliella bavariensis).